The sequence spans 901 residues: Protein translocase subunit SecA 1 (901 aa).

Residues Gln-87, 105-109 (GEGKT), and Asp-500 contribute to the ATP site. A disordered region spans residues 847–901 (LNHPESGSWGGEGEGPSSEGAPHLPFKRDGEKVGRNQACPCGSGKKYKQCCGKLS). Residues Cys-885, Cys-887, Cys-896, and Cys-897 each contribute to the Zn(2+) site.

It belongs to the SecA family. As to quaternary structure, monomer and homodimer. Part of the essential Sec protein translocation apparatus which comprises SecA, SecYEG and auxiliary proteins SecDF-YajC and YidC. It depends on Zn(2+) as a cofactor.

Its subcellular location is the cell inner membrane. It is found in the cytoplasm. It carries out the reaction ATP + H2O + cellular proteinSide 1 = ADP + phosphate + cellular proteinSide 2.. Its function is as follows. Part of the Sec protein translocase complex. Interacts with the SecYEG preprotein conducting channel. Has a central role in coupling the hydrolysis of ATP to the transfer of proteins into and across the cell membrane, serving both as a receptor for the preprotein-SecB complex and as an ATP-driven molecular motor driving the stepwise translocation of polypeptide chains across the membrane. The chain is Protein translocase subunit SecA 1 from Magnetococcus marinus (strain ATCC BAA-1437 / JCM 17883 / MC-1).